Consider the following 198-residue polypeptide: TM2 domain-containing protein 2 (198 aa).

The first 27 residues, 1–27 (MRWPVPPLGYLLLGGQGLLLTFSLISS), serve as a signal peptide directing secretion. The Extracellular segment spans residues 28 to 128 (QNNTSPVTYP…FLRGNRPCIK (101 aa)). Residues Asn29, Asn40, and Asn76 are each glycosylated (N-linked (GlcNAc...) asparagine). The helical transmembrane segment at 129 to 149 (YTGHYFITTLLYSFFLGCFGV) threads the bilayer. The 49-residue stretch at 131 to 179 (GHYFITTLLYSFFLGCFGVDRFCLGHTGTAVGKLLTWGGLGIWWFVDLI) folds into the TM2 domain. Over 150 to 166 (DRFCLGHTGTAVGKLLT) the chain is Cytoplasmic. A helical membrane pass occupies residues 167 to 187 (WGGLGIWWFVDLILLITGGLM). Over 188–198 (PSDNSNWCTIY) the chain is Extracellular.

It belongs to the TM2 family.

It localises to the membrane. This is TM2 domain-containing protein 2 (tm2d2) from Xenopus laevis (African clawed frog).